Reading from the N-terminus, the 237-residue chain is Aspartate/glutamate leucyltransferase (237 aa).

This sequence belongs to the R-transferase family. Bpt subfamily.

It is found in the cytoplasm. It carries out the reaction N-terminal L-glutamyl-[protein] + L-leucyl-tRNA(Leu) = N-terminal L-leucyl-L-glutamyl-[protein] + tRNA(Leu) + H(+). The catalysed reaction is N-terminal L-aspartyl-[protein] + L-leucyl-tRNA(Leu) = N-terminal L-leucyl-L-aspartyl-[protein] + tRNA(Leu) + H(+). Its function is as follows. Functions in the N-end rule pathway of protein degradation where it conjugates Leu from its aminoacyl-tRNA to the N-termini of proteins containing an N-terminal aspartate or glutamate. This is Aspartate/glutamate leucyltransferase from Marinobacter nauticus (strain ATCC 700491 / DSM 11845 / VT8) (Marinobacter aquaeolei).